Consider the following 271-residue polypeptide: Ribosomal RNA small subunit methyltransferase A (271 aa).

S-adenosyl-L-methionine-binding residues include H11, L13, G38, E58, D86, and N101.

It belongs to the class I-like SAM-binding methyltransferase superfamily. rRNA adenine N(6)-methyltransferase family. RsmA subfamily.

The protein localises to the cytoplasm. The catalysed reaction is adenosine(1518)/adenosine(1519) in 16S rRNA + 4 S-adenosyl-L-methionine = N(6)-dimethyladenosine(1518)/N(6)-dimethyladenosine(1519) in 16S rRNA + 4 S-adenosyl-L-homocysteine + 4 H(+). In terms of biological role, specifically dimethylates two adjacent adenosines (A1518 and A1519) in the loop of a conserved hairpin near the 3'-end of 16S rRNA in the 30S particle. May play a critical role in biogenesis of 30S subunits. The sequence is that of Ribosomal RNA small subunit methyltransferase A from Helicobacter pylori (strain HPAG1).